The primary structure comprises 570 residues: Phosphoribosylaminoimidazole carboxylase (570 aa).

The ATP-grasp domain maps to 110-297; the sequence is KQHLVKNRIP…QFEAHLRAIL (188 aa). Position 137–192 (137–192) interacts with ATP; it reads GSSLGYPFVLKSRTLAYDGRGNFVVKSEEDIEKGLEFLANRPLYAEKWASFKKELS.

In the C-terminal section; belongs to the AIR carboxylase family. Class I subfamily.

It catalyses the reaction 5-amino-1-(5-phospho-D-ribosyl)imidazole-4-carboxylate + H(+) = 5-amino-1-(5-phospho-beta-D-ribosyl)imidazole + CO2. Its pathway is purine metabolism; IMP biosynthesis via de novo pathway; 5-amino-1-(5-phospho-D-ribosyl)imidazole-4-carboxylate from 5-amino-1-(5-phospho-D-ribosyl)imidazole (carboxylase route): step 1/1. The protein is Phosphoribosylaminoimidazole carboxylase (ADE2) of Candida glabrata (strain ATCC 2001 / BCRC 20586 / JCM 3761 / NBRC 0622 / NRRL Y-65 / CBS 138) (Yeast).